Consider the following 627-residue polypeptide: UvrABC system protein C (627 aa).

One can recognise a GIY-YIG domain in the interval 22–100 (NNPGVYRMFN…IKRLRPRFNV (79 aa)). The region spanning 210 to 245 (QSVKDHLAAAMQAASADLDFEHAAVYRDRLAALSHV) is the UVR domain.

This sequence belongs to the UvrC family. In terms of assembly, interacts with UvrB in an incision complex.

The protein resides in the cytoplasm. Functionally, the UvrABC repair system catalyzes the recognition and processing of DNA lesions. UvrC both incises the 5' and 3' sides of the lesion. The N-terminal half is responsible for the 3' incision and the C-terminal half is responsible for the 5' incision. This chain is UvrABC system protein C, found in Brucella abortus biovar 1 (strain 9-941).